The chain runs to 565 residues: uncharacterized protein (565 aa).

Helical transmembrane passes span L14 to F34, L36 to V56, M92 to I112, V117 to A137, and I157 to L177. The 86-residue stretch at P296 to Y381 folds into the RCK C-terminal domain. Transmembrane regions (helical) follow at residues M391–M411, V414–L434, A448–A468, L481–M501, F508–I530, and V545–M565.

Belongs to the AAE transporter (TC 2.A.81) family.

The protein localises to the cell membrane. This is an uncharacterized protein from Bacteroides fragilis (strain YCH46).